A 1375-amino-acid polypeptide reads, in one-letter code: DNA-directed RNA polymerase subunit beta' (1375 aa).

Zn(2+) is bound by residues cysteine 70, cysteine 72, cysteine 85, and cysteine 88. 3 residues coordinate Mg(2+): aspartate 460, aspartate 462, and aspartate 464. The Zn(2+) site is built by cysteine 800, cysteine 874, cysteine 881, and cysteine 884.

This sequence belongs to the RNA polymerase beta' chain family. As to quaternary structure, the RNAP catalytic core consists of 2 alpha, 1 beta, 1 beta' and 1 omega subunit. When a sigma factor is associated with the core the holoenzyme is formed, which can initiate transcription. Mg(2+) is required as a cofactor. Requires Zn(2+) as cofactor.

The catalysed reaction is RNA(n) + a ribonucleoside 5'-triphosphate = RNA(n+1) + diphosphate. Its function is as follows. DNA-dependent RNA polymerase catalyzes the transcription of DNA into RNA using the four ribonucleoside triphosphates as substrates. The protein is DNA-directed RNA polymerase subunit beta' of Bdellovibrio bacteriovorus (strain ATCC 15356 / DSM 50701 / NCIMB 9529 / HD100).